Here is a 380-residue protein sequence, read N- to C-terminus: tRNA(Met) cytidine acetate ligase (380 aa).

Residues 7-20 (IAEY…HLYQ), G101, N151, and R176 each bind ATP.

It belongs to the TmcAL family.

The protein resides in the cytoplasm. The enzyme catalyses cytidine(34) in elongator tRNA(Met) + acetate + ATP = N(4)-acetylcytidine(34) in elongator tRNA(Met) + AMP + diphosphate. Catalyzes the formation of N(4)-acetylcytidine (ac(4)C) at the wobble position of elongator tRNA(Met), using acetate and ATP as substrates. First activates an acetate ion to form acetyladenylate (Ac-AMP) and then transfers the acetyl group to tRNA to form ac(4)C34. The polypeptide is tRNA(Met) cytidine acetate ligase (Ligilactobacillus salivarius (strain UCC118) (Lactobacillus salivarius)).